The primary structure comprises 55 residues: ATP synthase small subunit 6-A, mitochondrial (55 aa).

The N-terminal 11 residues, 1–11 (MRLFDPWPVFF), are a transit peptide targeting the mitochondrion. A helical membrane pass occupies residues 21–39 (FLTGFAVTGVLITKLTAGL).

The protein belongs to the ATPase 6 subunit family.

It localises to the mitochondrion inner membrane. Mitochondrial membrane ATP synthase (F(1)F(0) ATP synthase or Complex V) produces ATP from ADP in the presence of a proton gradient across the membrane which is generated by electron transport complexes of the respiratory chain. F-type ATPases consist of two structural domains, F(1) - containing the extramembraneous catalytic core and F(0) - containing the membrane proton channel, linked together by a central stalk and a peripheral stalk. During catalysis, ATP synthesis in the catalytic domain of F(1) is coupled via a rotary mechanism of the central stalk subunits to proton translocation. Part of the complex F(0) domain. Confers tolerance to several abiotic stresses (e.g. salt, mannitol, drought, oxidative and cold stresses), probably by providing additional energy needed for cell homeostasis. In Arabidopsis thaliana (Mouse-ear cress), this protein is ATP synthase small subunit 6-A, mitochondrial.